The following is a 603-amino-acid chain: Adenine deaminase 1 (603 aa).

This sequence belongs to the metallo-dependent hydrolases superfamily. Adenine deaminase family. Requires Mn(2+) as cofactor.

The catalysed reaction is adenine + H2O + H(+) = hypoxanthine + NH4(+). This chain is Adenine deaminase 1, found in Carboxydothermus hydrogenoformans (strain ATCC BAA-161 / DSM 6008 / Z-2901).